Consider the following 199-residue polypeptide: Small ribosomal subunit protein uS4 (199 aa).

The 64-residue stretch at 91–154 (SRLDNVVYRL…KDLIIVKEAL (64 aa)) folds into the S4 RNA-binding domain.

This sequence belongs to the universal ribosomal protein uS4 family. As to quaternary structure, part of the 30S ribosomal subunit. Contacts protein S5. The interaction surface between S4 and S5 is involved in control of translational fidelity.

Functionally, one of the primary rRNA binding proteins, it binds directly to 16S rRNA where it nucleates assembly of the body of the 30S subunit. With S5 and S12 plays an important role in translational accuracy. This chain is Small ribosomal subunit protein uS4, found in Phytoplasma mali (strain AT).